The primary structure comprises 224 residues: Octanoyltransferase (224 aa).

The 179-residue stretch at 45 to 223 folds into the BPL/LPL catalytic domain; sequence PSNKQAVWML…SLNKRFGLLW (179 aa). Substrate is bound by residues 87 to 94, 154 to 156, and 167 to 169; these read RGGDVTHH, SIG, and GIA. Cys-185 functions as the Acyl-thioester intermediate in the catalytic mechanism.

This sequence belongs to the LipB family.

The protein localises to the cytoplasm. The catalysed reaction is octanoyl-[ACP] + L-lysyl-[protein] = N(6)-octanoyl-L-lysyl-[protein] + holo-[ACP] + H(+). Its pathway is protein modification; protein lipoylation via endogenous pathway; protein N(6)-(lipoyl)lysine from octanoyl-[acyl-carrier-protein]: step 1/2. Its function is as follows. Catalyzes the transfer of endogenously produced octanoic acid from octanoyl-acyl-carrier-protein onto the lipoyl domains of lipoate-dependent enzymes. Lipoyl-ACP can also act as a substrate although octanoyl-ACP is likely to be the physiological substrate. This Prochlorococcus marinus (strain SARG / CCMP1375 / SS120) protein is Octanoyltransferase.